Consider the following 300-residue polypeptide: Virginiamycin B lyase (300 aa).

His-231 is a binding site for substrate. A Mg(2+)-binding site is contributed by Glu-270. The active-site Proton acceptor is His-272. Glu-287 serves as a coordination point for Mg(2+).

This sequence belongs to the Vgb family. In terms of assembly, monomer. Mg(2+) is required as a cofactor.

Inactivates the type B streptogramin antibiotics by linearizing the lactone ring at the ester linkage, generating a free phenylglycine carboxylate and converting the threonyl moiety into 2-amino-butenoic acid. This chain is Virginiamycin B lyase, found in Saccharopolyspora erythraea (strain ATCC 11635 / DSM 40517 / JCM 4748 / NBRC 13426 / NCIMB 8594 / NRRL 2338).